The sequence spans 426 residues: MDQNIIINILRKEMMPGLGVTEPASIALSSAKAYEVIGGEIKNIKIIADPGLFKNAFSCAIPGTKEVGNEMAALLGAICGDASLGLECLRKIKKEDVSKAKTMLDKIHIEIKSQTEGLYVESIVTTNNGIGRTIIRYKHDNIVLVEKNNKILYQKENTLNKSNNFSQEAIDSKKITEMKLDEIVEFVNNVNYEKIEFLLESIKMNKKLSEKGLEGLGIGLGKLILESCNENNYELYAEALTCSAIDARVSGAAVPAMTVTGSGNHGIIATLPLLAIKEKKNLNNEMLARSIALSYIINIYIKEFSGKLSAFCGCAVAAGTGVSAGICYLLGGRLKEIENTIKNMASNITGMICTGGNLACSLKANTGVKAAFLSAKMALKNIVIPNKCGIVSNSIEDTMKNIGRIAYPGMMQTDKEILNIMIESSK.

This sequence belongs to the UPF0597 family.

The sequence is that of UPF0597 protein CLI_1810 from Clostridium botulinum (strain Langeland / NCTC 10281 / Type F).